The primary structure comprises 231 residues: Cytidylate kinase (231 aa).

Gly12–Thr20 provides a ligand contact to ATP.

This sequence belongs to the cytidylate kinase family. Type 1 subfamily.

It localises to the cytoplasm. It catalyses the reaction CMP + ATP = CDP + ADP. It carries out the reaction dCMP + ATP = dCDP + ADP. The polypeptide is Cytidylate kinase (Shewanella amazonensis (strain ATCC BAA-1098 / SB2B)).